Reading from the N-terminus, the 139-residue chain is Nucleoside diphosphate kinase (139 aa).

Residues Lys10, Phe58, Arg86, Thr92, Arg103, and Asn113 each coordinate ATP. The Pros-phosphohistidine intermediate role is filled by His116.

This sequence belongs to the NDK family. Homotetramer. It depends on Mg(2+) as a cofactor.

It is found in the cytoplasm. It catalyses the reaction a 2'-deoxyribonucleoside 5'-diphosphate + ATP = a 2'-deoxyribonucleoside 5'-triphosphate + ADP. The catalysed reaction is a ribonucleoside 5'-diphosphate + ATP = a ribonucleoside 5'-triphosphate + ADP. Its function is as follows. Major role in the synthesis of nucleoside triphosphates other than ATP. The ATP gamma phosphate is transferred to the NDP beta phosphate via a ping-pong mechanism, using a phosphorylated active-site intermediate. This Nitratidesulfovibrio vulgaris (strain ATCC 29579 / DSM 644 / CCUG 34227 / NCIMB 8303 / VKM B-1760 / Hildenborough) (Desulfovibrio vulgaris) protein is Nucleoside diphosphate kinase.